The sequence spans 149 residues: Glucosamine 6-phosphate N-acetyltransferase (149 aa).

The N-acetyltransferase domain occupies 7-149 (YTFRKLKLTD…DGGVEMVCRF (143 aa)). Residues threonine 29, 76–79 (KLIH), and 88–90 (EDI) each bind substrate. Acetyl-CoA contacts are provided by residues 90–92 (ISV) and 98–103 (GKKLGY). Substrate-binding positions include 119 to 120 (YK) and aspartate 124. Acetyl-CoA is bound at residue 133 to 135 (YEK). Arginine 148 provides a ligand contact to substrate.

This sequence belongs to the acetyltransferase family. GNA1 subfamily.

It catalyses the reaction D-glucosamine 6-phosphate + acetyl-CoA = N-acetyl-D-glucosamine 6-phosphate + CoA + H(+). The protein operates within nucleotide-sugar biosynthesis; UDP-N-acetyl-alpha-D-glucosamine biosynthesis; N-acetyl-alpha-D-glucosamine 1-phosphate from alpha-D-glucosamine 6-phosphate (route I): step 1/2. The chain is Glucosamine 6-phosphate N-acetyltransferase (GNA1) from Candida albicans (Yeast).